A 198-amino-acid polypeptide reads, in one-letter code: MTPLALIMIIIAYLLGSISSAVLICRLKGLPDPRTSGSHNPGATNVFRIGGRSAAGLVLLCDILKGMLPVWGGYFLEINPFMLGIIAISACLGHMYPLFFHFKGGKGVATALGALAPIGLDLTGMLFGCWVVTVLVTGYSSLASMITALLAPLFTWLVKPQYTLPVAMLSCLIVLKHHENIKRFFEGKETKIWQRKRD.

The next 5 helical transmembrane spans lie at 4–24 (LALIMIIIAYLLGSISSAVLI), 53–75 (SAAGLVLLCDILKGMLPVWGGYF), 80–102 (PFMLGIIAISACLGHMYPLFFHF), 112–132 (LGALAPIGLDLTGMLFGCWVV), and 134–154 (VLVTGYSSLASMITALLAPLF).

Belongs to the PlsY family. Probably interacts with PlsX.

The protein resides in the cell inner membrane. The catalysed reaction is an acyl phosphate + sn-glycerol 3-phosphate = a 1-acyl-sn-glycero-3-phosphate + phosphate. Its pathway is lipid metabolism; phospholipid metabolism. Its function is as follows. Catalyzes the transfer of an acyl group from acyl-phosphate (acyl-PO(4)) to glycerol-3-phosphate (G3P) to form lysophosphatidic acid (LPA). This enzyme utilizes acyl-phosphate as fatty acyl donor, but not acyl-CoA or acyl-ACP. This Aliivibrio fischeri (strain ATCC 700601 / ES114) (Vibrio fischeri) protein is Glycerol-3-phosphate acyltransferase.